We begin with the raw amino-acid sequence, 64 residues long: Large ribosomal subunit protein uL1 (64 aa).

It belongs to the universal ribosomal protein uL1 family. As to quaternary structure, part of the 50S ribosomal subunit.

Binds directly to 23S rRNA. The L1 stalk is quite mobile in the ribosome, and is involved in E site tRNA release. Functionally, protein L1 is also a translational repressor protein, it controls the translation of the L11 operon by binding to its mRNA. The sequence is that of Large ribosomal subunit protein uL1 (rplA) from Streptomyces lavendulae.